The chain runs to 331 residues: Meiotically up-regulated gene 172 protein (331 aa).

A coiled-coil region spans residues 72 to 166; sequence IKNNEYEKQR…KGNYGLVKAR (95 aa).

This sequence belongs to the ADIP family.

The protein localises to the cytoplasm. In terms of biological role, has a role in meiosis. This chain is Meiotically up-regulated gene 172 protein (mug172), found in Schizosaccharomyces pombe (strain 972 / ATCC 24843) (Fission yeast).